We begin with the raw amino-acid sequence, 179 residues long: UPF0227 protein Shewmr4_1727 (179 aa).

The protein belongs to the UPF0227 family.

This Shewanella sp. (strain MR-4) protein is UPF0227 protein Shewmr4_1727.